Here is a 204-residue protein sequence, read N- to C-terminus: MDRAILLLSVLSVGVSSQPITEGQRLFSIAVERVHNLHLLAQRLFSEFESSLQTEEQRQLNKIFLQDFCNSDYIISPIDKHETQRSSVLKLLSISYRLIESWEFPSRSLSVGPAARNQISPKLSELKTGILVLIGANQDGAEMFPDSSTLQLAPYGNYYQSLGADESLRRTYELLACFKKDMHKVETYLTVAKCRLSPEANCTL.

The signal sequence occupies residues Met-1–Ser-17. Position 18 is a pyrrolidone carboxylic acid (Gln-18). His-35 is a Zn(2+) binding site. A disulfide bridge connects residues Cys-69 and Cys-177. Zn(2+) is bound at residue Glu-186. Cys-194 and Cys-202 are joined by a disulfide.

This sequence belongs to the somatotropin/prolactin family.

It localises to the secreted. In terms of biological role, growth hormone plays an important role in growth control and is involved in the regulation of several anabolic processes. Implicated as an osmoregulatory substance important for seawater adaptation. The polypeptide is Somatotropin (gh) (Dicentrarchus labrax (European seabass)).